Reading from the N-terminus, the 104-residue chain is Intracellular chorismate mutase (104 aa).

Residues Ala-23–Tyr-104 enclose the Chorismate mutase domain. The chorismate site is built by Arg-59, Val-68, and Glu-72.

As to quaternary structure, homodimer. Probably interacts with AroG (MSMEG_4244).

It is found in the cytoplasm. It carries out the reaction chorismate = prephenate. The protein operates within metabolic intermediate biosynthesis; prephenate biosynthesis; prephenate from chorismate: step 1/1. The formation of the complex with AroG activates the chorismate mutase activity. In terms of biological role, catalyzes the Claisen rearrangement of chorismate to prephenate. Probably involved in the aromatic amino acid biosynthesis. The protein is Intracellular chorismate mutase of Mycolicibacterium smegmatis (strain ATCC 700084 / mc(2)155) (Mycobacterium smegmatis).